The sequence spans 281 residues: Elongation factor Ts (281 aa).

The tract at residues 80–83 (TDFV) is involved in Mg(2+) ion dislocation from EF-Tu.

Belongs to the EF-Ts family.

The protein resides in the cytoplasm. In terms of biological role, associates with the EF-Tu.GDP complex and induces the exchange of GDP to GTP. It remains bound to the aminoacyl-tRNA.EF-Tu.GTP complex up to the GTP hydrolysis stage on the ribosome. The chain is Elongation factor Ts from Vibrio campbellii (strain ATCC BAA-1116).